The chain runs to 273 residues: Vitamin B12-binding protein (273 aa).

A signal peptide spans 1-18; sequence MMKTLSSLLLLFSVSLQA. The Fe/B12 periplasmic-binding domain maps to 23–273; sequence RVISLAPHAT…EHFASIEQKR (251 aa). A disulfide bridge connects residues Cys-183 and Cys-263.

This sequence belongs to the BtuF family. As to quaternary structure, the complex is composed of two ATP-binding proteins (BtuD), two transmembrane proteins (BtuC) and a solute-binding protein (BtuF).

It localises to the periplasm. Functionally, part of the ABC transporter complex BtuCDF involved in vitamin B12 import. Binds vitamin B12 and delivers it to the periplasmic surface of BtuC. In Vibrio vulnificus (strain CMCP6), this protein is Vitamin B12-binding protein.